The following is a 361-amino-acid chain: Mannose-1-phosphate guanyltransferase (361 aa).

It belongs to the transferase hexapeptide repeat family.

It localises to the cytoplasm. The enzyme catalyses alpha-D-mannose 1-phosphate + GTP + H(+) = GDP-alpha-D-mannose + diphosphate. The protein operates within nucleotide-sugar biosynthesis; GDP-alpha-D-mannose biosynthesis; GDP-alpha-D-mannose from alpha-D-mannose 1-phosphate (GTP route): step 1/1. Its function is as follows. Involved in cell wall synthesis where it is required for glycosylation. Involved in cell cycle progression through cell-size checkpoint. This chain is Mannose-1-phosphate guanyltransferase (MPG1), found in Eremothecium gossypii (strain ATCC 10895 / CBS 109.51 / FGSC 9923 / NRRL Y-1056) (Yeast).